The primary structure comprises 477 residues: Methylenetetrahydrofolate--tRNA-(uracil-5-)-methyltransferase TrmFO (477 aa).

Position 15–20 (15–20) interacts with FAD; the sequence is GAGLAG.

The protein belongs to the MnmG family. TrmFO subfamily. FAD is required as a cofactor.

Its subcellular location is the cytoplasm. It catalyses the reaction uridine(54) in tRNA + (6R)-5,10-methylene-5,6,7,8-tetrahydrofolate + NADH + H(+) = 5-methyluridine(54) in tRNA + (6S)-5,6,7,8-tetrahydrofolate + NAD(+). The enzyme catalyses uridine(54) in tRNA + (6R)-5,10-methylene-5,6,7,8-tetrahydrofolate + NADPH + H(+) = 5-methyluridine(54) in tRNA + (6S)-5,6,7,8-tetrahydrofolate + NADP(+). Catalyzes the folate-dependent formation of 5-methyl-uridine at position 54 (M-5-U54) in all tRNAs. This chain is Methylenetetrahydrofolate--tRNA-(uracil-5-)-methyltransferase TrmFO, found in Nitrobacter winogradskyi (strain ATCC 25391 / DSM 10237 / CIP 104748 / NCIMB 11846 / Nb-255).